A 232-amino-acid polypeptide reads, in one-letter code: Peroxisomal protein PEX21 (232 aa).

Residue cysteine 5 forms a Glycyl cysteine thioester (Cys-Gly) (interchain with G-Cter in ubiquitin) linkage.

It belongs to the peroxin-21 family. As to quaternary structure, interacts with PEX7. Post-translationally, monoubiquitinated at Cys-5; acts as a signal for PEX21 extraction and is required for proper export from peroxisomes and recycling.

The protein localises to the cytoplasm. The protein resides in the cytosol. Its subcellular location is the peroxisome. Mediates peroxisomal import of proteins containing a C-terminal PTS2-type peroxisomal targeting signal via its interaction with PEX7. Interaction with PEX7 only takes place when PEX7 is associated with cargo proteins containing a PTS2 peroxisomal targeting signal. PEX7 along with PTS2-containing cargo proteins are then translocated through the PEX13-PEX14 docking complex together with PEX21. This Candida glabrata (strain ATCC 2001 / BCRC 20586 / JCM 3761 / NBRC 0622 / NRRL Y-65 / CBS 138) (Yeast) protein is Peroxisomal protein PEX21 (PEX21).